A 130-amino-acid polypeptide reads, in one-letter code: Nascent polypeptide-associated complex protein (130 aa).

The 69-residue stretch at 6 to 74 (GMNPRKMQQM…PVERDAADAI (69 aa)) folds into the NAC-A/B domain. The segment at 65–91 (PVERDAADAIEAAPADDSDDTDDDDAI) is disordered. A compositionally biased stretch (acidic residues) spans 78-90 (PADDSDDTDDDDA).

This sequence belongs to the NAC-alpha family. Homodimer. Interacts with the ribosome. Binds ribosomal RNA.

Its function is as follows. Contacts the emerging nascent chain on the ribosome. The protein is Nascent polypeptide-associated complex protein of Halobacterium salinarum (strain ATCC 700922 / JCM 11081 / NRC-1) (Halobacterium halobium).